The sequence spans 341 residues: Trace amine-associated receptor 13c (341 aa).

Topologically, residues 1–34 are extracellular; that stretch reads MDLSSQEYDPSQFCFPAVNNSCLKGTHHVSTQTV. A glycan (N-linked (GlcNAc...) asparagine) is linked at N19. Cystine bridges form between C22–C186 and C105–C186. The chain crosses the membrane as a helical span at residues 35 to 55; it reads VYLILASAMTVTVLGNSVVII. Residues 56–68 are Cytoplasmic-facing; the sequence is SIAHFKQLQTPTN. Residues 69–89 traverse the membrane as a helical segment; that stretch reads ILVMSLALADLLLGLVVMPFS. Over 90-105 the chain is Extracellular; sequence MIRSVDGCWYYGETFC. The helical transmembrane segment at 106-126 threads the bilayer; that stretch reads LLHTGFDLFLTSVSIFHLIFI. The Cytoplasmic segment spans residues 127 to 147; that stretch reads AVDRHQAVCFPLQYPTRITIP. Residues 148 to 168 form a helical membrane-spanning segment; it reads VAWVMVMISWSMAAFYSYGVV. Topologically, residues 169–195 are extracellular; sequence YSKANLEGLEEYIASVYCMGGCTLYFN. A helical transmembrane segment spans residues 196–219; sequence ALWSVLDTLLTFFLPCSVMVGLYA. At 220–257 the chain is on the cytoplasmic side; that stretch reads RIFVVAKKHIKSITEANQNENENVFKNPRRSERKAAKT. The chain crosses the membrane as a helical span at residues 258-278; it reads LGIVVGAFILCWLPFFINSLV. Over 279 to 292 the chain is Extracellular; the sequence is DPYINFSTPYALFD. A glycan (N-linked (GlcNAc...) asparagine) is linked at N283. The chain crosses the membrane as a helical span at residues 293–313; the sequence is AFGWLGYTNSTLNPIIYGLFY. The Cytoplasmic portion of the chain corresponds to 314–341; it reads PWFRKTLSLIVTLRIFEPNSSDINLFTV.

The protein belongs to the G-protein coupled receptor 1 family. Expressed in olfactory epithelium (at protein level). Detected in a sparse population of olfactory sensory neurons.

It localises to the cell membrane. In terms of biological role, olfactory receptor for medium length odd-chained diamines including cadaverine which is generated by bacterial decarboxylation of the basic amino acid lysine and contributes to the odor of decomposing tissue. Mediates pronounced innate aversion behavior to cadaverine. This is Trace amine-associated receptor 13c from Danio rerio (Zebrafish).